Here is a 91-residue protein sequence, read N- to C-terminus: UPF0335 protein BBta_6866 (91 aa).

The protein belongs to the UPF0335 family.

The sequence is that of UPF0335 protein BBta_6866 from Bradyrhizobium sp. (strain BTAi1 / ATCC BAA-1182).